A 243-amino-acid chain; its full sequence is DNA repair protein RecO (243 aa).

It belongs to the RecO family.

Functionally, involved in DNA repair and RecF pathway recombination. The polypeptide is DNA repair protein RecO (Bartonella quintana (strain Toulouse) (Rochalimaea quintana)).